A 629-amino-acid chain; its full sequence is 1-deoxy-D-xylulose-5-phosphate synthase (629 aa).

Thiamine diphosphate is bound by residues histidine 78 and 119 to 121 (AHS). A Mg(2+)-binding site is contributed by aspartate 150. Residues 151–152 (GA), asparagine 179, tyrosine 286, and glutamate 368 contribute to the thiamine diphosphate site. Asparagine 179 lines the Mg(2+) pocket.

The protein belongs to the transketolase family. DXPS subfamily. As to quaternary structure, homodimer. It depends on Mg(2+) as a cofactor. Thiamine diphosphate serves as cofactor.

It carries out the reaction D-glyceraldehyde 3-phosphate + pyruvate + H(+) = 1-deoxy-D-xylulose 5-phosphate + CO2. It participates in metabolic intermediate biosynthesis; 1-deoxy-D-xylulose 5-phosphate biosynthesis; 1-deoxy-D-xylulose 5-phosphate from D-glyceraldehyde 3-phosphate and pyruvate: step 1/1. Catalyzes the acyloin condensation reaction between C atoms 2 and 3 of pyruvate and glyceraldehyde 3-phosphate to yield 1-deoxy-D-xylulose-5-phosphate (DXP). The protein is 1-deoxy-D-xylulose-5-phosphate synthase of Acidovorax ebreus (strain TPSY) (Diaphorobacter sp. (strain TPSY)).